We begin with the raw amino-acid sequence, 185 residues long: Ribosome-recycling factor (185 aa).

Residues 127-158 (AVRNTRQDANNKVKKLEKDKEISEDESKKAQE) are disordered.

The protein belongs to the RRF family.

It localises to the cytoplasm. Functionally, responsible for the release of ribosomes from messenger RNA at the termination of protein biosynthesis. May increase the efficiency of translation by recycling ribosomes from one round of translation to another. The chain is Ribosome-recycling factor from Helicobacter pylori (strain G27).